Reading from the N-terminus, the 194-residue chain is Superoxide dismutase [Cu-Zn] (194 aa).

Positions 1–20 are cleaved as a signal peptide; the sequence is MTRPLALIIFLVAILTNTDP. The Cu cation site is built by histidine 85 and histidine 104. Cysteine 96 and cysteine 188 form a disulfide bridge. The Zn(2+) site is built by histidine 104, histidine 112, histidine 121, and aspartate 124. Histidine 162 serves as a coordination point for Cu cation.

It belongs to the Cu-Zn superoxide dismutase family. As to quaternary structure, homodimer. Cu cation is required as a cofactor. Requires Zn(2+) as cofactor.

The enzyme catalyses 2 superoxide + 2 H(+) = H2O2 + O2. In terms of biological role, destroys radicals which are normally produced within the cells and which are toxic to biological systems. This is Superoxide dismutase [Cu-Zn] from Ramazzottius varieornatus (Water bear).